Here is a 213-residue protein sequence, read N- to C-terminus: Amelogenin, X isoform (213 aa).

The signal sequence occupies residues 1 to 16; the sequence is MGTWILFACLLGAAFS. S32 carries the phosphoserine modification. 2 stretches are compositionally biased toward low complexity: residues 96–105 and 114–160; these read VPQQPMMPVP and QHHQ…QPLQ. A disordered region spans residues 96 to 213; sequence VPQQPMMPVP…TDKTKREEVD (118 aa). Residues 161–194 are compositionally biased toward pro residues; that stretch reads PLQPQPPVHPIQPLPPQPPLPPIFPMQPLPPMLP.

This sequence belongs to the amelogenin family. In terms of assembly, interacts with KRT5. Phosphorylated by FAM20C in vitro.

It is found in the secreted. Its subcellular location is the extracellular space. The protein localises to the extracellular matrix. Its function is as follows. Plays a role in the biomineralization of teeth. Seems to regulate the formation of crystallites during the secretory stage of tooth enamel development. Thought to play a major role in the structural organization and mineralization of developing enamel. The chain is Amelogenin, X isoform (AMELX) from Bos taurus (Bovine).